We begin with the raw amino-acid sequence, 341 residues long: Ketol-acid reductoisomerase (NADP(+)) (341 aa).

The region spanning 2-181 is the KARI N-terminal Rossmann domain; it reads AKVYYNGDAN…GATRAGVLET (180 aa). NADP(+)-binding positions include 25 to 28, R48, S52, and 82 to 85; these read YGSQ and DEKQ. H107 is an active-site residue. Residue G133 coordinates NADP(+). A KARI C-terminal knotted domain is found at 182–327; sequence TFKEETETDL…RELRSMMPFV (146 aa). Mg(2+)-binding residues include D190, E194, E226, and E230. S251 contributes to the substrate binding site.

Belongs to the ketol-acid reductoisomerase family. Requires Mg(2+) as cofactor.

The enzyme catalyses (2R)-2,3-dihydroxy-3-methylbutanoate + NADP(+) = (2S)-2-acetolactate + NADPH + H(+). It catalyses the reaction (2R,3R)-2,3-dihydroxy-3-methylpentanoate + NADP(+) = (S)-2-ethyl-2-hydroxy-3-oxobutanoate + NADPH + H(+). The protein operates within amino-acid biosynthesis; L-isoleucine biosynthesis; L-isoleucine from 2-oxobutanoate: step 2/4. It functions in the pathway amino-acid biosynthesis; L-valine biosynthesis; L-valine from pyruvate: step 2/4. Involved in the biosynthesis of branched-chain amino acids (BCAA). Catalyzes an alkyl-migration followed by a ketol-acid reduction of (S)-2-acetolactate (S2AL) to yield (R)-2,3-dihydroxy-isovalerate. In the isomerase reaction, S2AL is rearranged via a Mg-dependent methyl migration to produce 3-hydroxy-3-methyl-2-ketobutyrate (HMKB). In the reductase reaction, this 2-ketoacid undergoes a metal-dependent reduction by NADPH to yield (R)-2,3-dihydroxy-isovalerate. This chain is Ketol-acid reductoisomerase (NADP(+)), found in Geobacillus sp. (strain WCH70).